Here is a 315-residue protein sequence, read N- to C-terminus: MTAQTAPAFPHRHLLGIEGLSRPDIESLLERADAAVALSRQVEKKRTTLRGRTQINLFFEPSTRTQSSFELAGKRLGADVMNMSVASSSVKKGETLIDTAATLNAMRPDIIVVRHHAAGAVHLLARKVDCAVVNAGDGAHEHPTQALLDALTIRRNKGGIEGLTVAICGDVLHSRVARSNIILLQALGARVRVIGPSTLLPTGIERFGVEVFTNMREGLKGCDIVMMLRLQRERMNGSFVPSVKEYFRYYGLDGDKLALAKPDALVMHPGPMNRGVEIASDIADGAQSLIREQVEMGVAVRMAVLEALATHLPNG.

Carbamoyl phosphate contacts are provided by Arg-64 and Thr-65. Position 92 (Lys-92) interacts with L-aspartate. Carbamoyl phosphate contacts are provided by Arg-114, His-142, and Gln-145. The L-aspartate site is built by Arg-175 and Arg-229. Residues Gly-270 and Pro-271 each contribute to the carbamoyl phosphate site.

It belongs to the aspartate/ornithine carbamoyltransferase superfamily. ATCase family. In terms of assembly, heterododecamer (2C3:3R2) of six catalytic PyrB chains organized as two trimers (C3), and six regulatory PyrI chains organized as three dimers (R2).

The catalysed reaction is carbamoyl phosphate + L-aspartate = N-carbamoyl-L-aspartate + phosphate + H(+). It functions in the pathway pyrimidine metabolism; UMP biosynthesis via de novo pathway; (S)-dihydroorotate from bicarbonate: step 2/3. Its function is as follows. Catalyzes the condensation of carbamoyl phosphate and aspartate to form carbamoyl aspartate and inorganic phosphate, the committed step in the de novo pyrimidine nucleotide biosynthesis pathway. The polypeptide is Aspartate carbamoyltransferase catalytic subunit (Methylorubrum populi (strain ATCC BAA-705 / NCIMB 13946 / BJ001) (Methylobacterium populi)).